Reading from the N-terminus, the 206-residue chain is Large ribosomal subunit protein uL4 (206 aa).

The protein belongs to the universal ribosomal protein uL4 family. As to quaternary structure, part of the 50S ribosomal subunit.

One of the primary rRNA binding proteins, this protein initially binds near the 5'-end of the 23S rRNA. It is important during the early stages of 50S assembly. It makes multiple contacts with different domains of the 23S rRNA in the assembled 50S subunit and ribosome. Functionally, forms part of the polypeptide exit tunnel. The protein is Large ribosomal subunit protein uL4 of Bradyrhizobium sp. (strain ORS 278).